The following is a 2293-amino-acid chain: Protein Ycf2 (2293 aa).

Gly1647–Ser1654 is a binding site for ATP.

It belongs to the Ycf2 family.

It localises to the plastid. The protein localises to the chloroplast stroma. Its function is as follows. Probable ATPase of unknown function. Its presence in a non-photosynthetic plant (Epifagus virginiana) and experiments in tobacco indicate that it has an essential function which is probably not related to photosynthesis. In Lobularia maritima (Sweet alyssum), this protein is Protein Ycf2.